Reading from the N-terminus, the 320-residue chain is Protein EI24 homolog (320 aa).

3 helical membrane-spanning segments follow: residues glutamine 41–isoleucine 61, glycine 94–leucine 114, and isoleucine 175–glycine 195. The N-linked (GlcNAc...) asparagine glycan is linked to asparagine 217. Transmembrane regions (helical) follow at residues leucine 227 to alanine 247, isoleucine 248 to valine 268, and leucine 292 to phenylalanine 312.

It belongs to the EI24 (TC 9.B.7) family.

It is found in the membrane. This chain is Protein EI24 homolog, found in Arabidopsis thaliana (Mouse-ear cress).